Reading from the N-terminus, the 938-residue chain is Isoleucine--tRNA ligase (938 aa).

A 'HIGH' region motif is present at residues 58 to 68 (PYANGSIHIGH). E561 is a binding site for L-isoleucyl-5'-AMP. The short motif at 602-606 (KMSKS) is the 'KMSKS' region element. Residue K605 coordinates ATP. 4 residues coordinate Zn(2+): C901, C904, C921, and C924.

This sequence belongs to the class-I aminoacyl-tRNA synthetase family. IleS type 1 subfamily. As to quaternary structure, monomer. It depends on Zn(2+) as a cofactor.

It is found in the cytoplasm. It catalyses the reaction tRNA(Ile) + L-isoleucine + ATP = L-isoleucyl-tRNA(Ile) + AMP + diphosphate. Functionally, catalyzes the attachment of isoleucine to tRNA(Ile). As IleRS can inadvertently accommodate and process structurally similar amino acids such as valine, to avoid such errors it has two additional distinct tRNA(Ile)-dependent editing activities. One activity is designated as 'pretransfer' editing and involves the hydrolysis of activated Val-AMP. The other activity is designated 'posttransfer' editing and involves deacylation of mischarged Val-tRNA(Ile). The polypeptide is Isoleucine--tRNA ligase (Serratia proteamaculans (strain 568)).